The sequence spans 323 residues: Cytochrome c biogenesis protein CcsA (323 aa).

Helical transmembrane passes span 9–29 (ILTH…LLNL), 45–62 (MMAT…RWIY), 71–91 (LYES…VPYF), 98–118 (LSAI…SGLL), 143–163 (MLLG…LLVI), 227–247 (IISL…VWAN), 261–275 (TWAF…IYLH), and 285–305 (VGPA…YFGV).

The protein belongs to the CcmF/CycK/Ccl1/NrfE/CcsA family. In terms of assembly, may interact with Ccs1.

The protein localises to the plastid. Its subcellular location is the chloroplast thylakoid membrane. In terms of biological role, required during biogenesis of c-type cytochromes (cytochrome c6 and cytochrome f) at the step of heme attachment. This Calycanthus floridus var. glaucus (Eastern sweetshrub) protein is Cytochrome c biogenesis protein CcsA.